The primary structure comprises 385 residues: Serine/threonine-protein kinase 52 (385 aa).

The Protein kinase domain maps to 82 to 356 (LIIKTVLARG…PEMDEVVPML (275 aa)). Residues 88-96 (LARGTFGTV) and K109 each bind ATP. D227 serves as the catalytic Proton acceptor.

Belongs to the protein kinase superfamily. Ser/Thr protein kinase family. In terms of assembly, binds to CBC1. Associates with PHOT1, PHOT2, BLUS1 and PM H(+)-ATPase (e.g. AHA1). Autophosphorylated. Phosphorylated by HT1 in response to low CO(2) concentrations. Expressed in guard cells.

It localises to the cytoplasm. It is found in the cytosol. It catalyses the reaction L-seryl-[protein] + ATP = O-phospho-L-seryl-[protein] + ADP + H(+). The catalysed reaction is L-threonyl-[protein] + ATP = O-phospho-L-threonyl-[protein] + ADP + H(+). Its function is as follows. Serine/threonine protein kinase that phosphorylates proteins on serine and threonine residues. Collectively with CBC1, acts as a negative regulator of stomatal opening, probably via the inhibition of plasma membrane-type ATPases (AHA1 and AHA2) activity in guard cells, but in an abscisic acid (ABA)-independent manner. However, at low concentrations of CO(2), together with CBC1, stimulates stomatal opening via the inhibition of S-type anion channels in response to blue light (BL) and red light (RL), thus being a key component to maximize photosynthesis in the light under low CO(2) conditions. Required for temperature decrease in leaves. Downstream target of HIGH LEAF TEMPERATURE1 (HT1) during low CO(2)-induced stomatal opening. In Arabidopsis thaliana (Mouse-ear cress), this protein is Serine/threonine-protein kinase 52.